The following is a 322-amino-acid chain: Ferrochelatase (322 aa).

Fe cation is bound by residues histidine 194 and glutamate 275.

The protein belongs to the ferrochelatase family.

It is found in the cytoplasm. It catalyses the reaction heme b + 2 H(+) = protoporphyrin IX + Fe(2+). It functions in the pathway porphyrin-containing compound metabolism; protoheme biosynthesis; protoheme from protoporphyrin-IX: step 1/1. Functionally, catalyzes the ferrous insertion into protoporphyrin IX. This chain is Ferrochelatase, found in Yersinia enterocolitica.